The sequence spans 400 residues: CCA-adding enzyme (400 aa).

The ATP site is built by Gly28 and Arg31. CTP is bound by residues Gly28 and Arg31. The Mg(2+) site is built by Asp41 and Asp43. ATP is bound by residues Arg112, Asp155, Arg158, Arg161, and Arg164. CTP contacts are provided by Arg112, Asp155, Arg158, Arg161, and Arg164.

Belongs to the tRNA nucleotidyltransferase/poly(A) polymerase family. Bacterial CCA-adding enzyme type 3 subfamily. As to quaternary structure, homodimer. The cofactor is Mg(2+).

It catalyses the reaction a tRNA precursor + 2 CTP + ATP = a tRNA with a 3' CCA end + 3 diphosphate. The enzyme catalyses a tRNA with a 3' CCA end + 2 CTP + ATP = a tRNA with a 3' CCACCA end + 3 diphosphate. Catalyzes the addition and repair of the essential 3'-terminal CCA sequence in tRNAs without using a nucleic acid template. Adds these three nucleotides in the order of C, C, and A to the tRNA nucleotide-73, using CTP and ATP as substrates and producing inorganic pyrophosphate. tRNA 3'-terminal CCA addition is required both for tRNA processing and repair. Also involved in tRNA surveillance by mediating tandem CCA addition to generate a CCACCA at the 3' terminus of unstable tRNAs. While stable tRNAs receive only 3'-terminal CCA, unstable tRNAs are marked with CCACCA and rapidly degraded. This is CCA-adding enzyme from Staphylococcus epidermidis (strain ATCC 12228 / FDA PCI 1200).